The following is a 399-amino-acid chain: Dual-specificity RNA methyltransferase RlmN (399 aa).

E122 serves as the catalytic Proton acceptor. Residues 128–371 (ETDRGTLCVS…VRTPRGRDIL (244 aa)) enclose the Radical SAM core domain. C135 and C374 are disulfide-bonded. Positions 142, 146, and 149 each coordinate [4Fe-4S] cluster. Residues 200-201 (GE), S232, 254-256 (SLH), and N331 contribute to the S-adenosyl-L-methionine site. C374 functions as the S-methylcysteine intermediate in the catalytic mechanism.

It belongs to the radical SAM superfamily. RlmN family. The cofactor is [4Fe-4S] cluster.

It localises to the cytoplasm. The catalysed reaction is adenosine(2503) in 23S rRNA + 2 reduced [2Fe-2S]-[ferredoxin] + 2 S-adenosyl-L-methionine = 2-methyladenosine(2503) in 23S rRNA + 5'-deoxyadenosine + L-methionine + 2 oxidized [2Fe-2S]-[ferredoxin] + S-adenosyl-L-homocysteine. It carries out the reaction adenosine(37) in tRNA + 2 reduced [2Fe-2S]-[ferredoxin] + 2 S-adenosyl-L-methionine = 2-methyladenosine(37) in tRNA + 5'-deoxyadenosine + L-methionine + 2 oxidized [2Fe-2S]-[ferredoxin] + S-adenosyl-L-homocysteine. Specifically methylates position 2 of adenine 2503 in 23S rRNA and position 2 of adenine 37 in tRNAs. m2A2503 modification seems to play a crucial role in the proofreading step occurring at the peptidyl transferase center and thus would serve to optimize ribosomal fidelity. This chain is Dual-specificity RNA methyltransferase RlmN, found in Rhodopseudomonas palustris (strain ATCC BAA-98 / CGA009).